The sequence spans 368 residues: Chaperone protein DnaJ (368 aa).

In terms of domain architecture, J spans 5-65; the sequence is DYYEVLGLTK…QKKARYDQFG (61 aa). The CR-type zinc finger occupies 125 to 207; the sequence is GKETEIEIPK…CRGEGKVQKR (83 aa). 8 residues coordinate Zn(2+): C138, C141, C155, C158, C181, C184, C195, and C198. CXXCXGXG motif repeat units follow at residues 138–145, 155–162, 181–188, and 195–202; these read CETCHGSG, CSTCNGAG, CTTCHGTG, and CSTCRGEG.

The protein belongs to the DnaJ family. In terms of assembly, homodimer. The cofactor is Zn(2+).

It is found in the cytoplasm. Its function is as follows. Participates actively in the response to hyperosmotic and heat shock by preventing the aggregation of stress-denatured proteins and by disaggregating proteins, also in an autonomous, DnaK-independent fashion. Unfolded proteins bind initially to DnaJ; upon interaction with the DnaJ-bound protein, DnaK hydrolyzes its bound ATP, resulting in the formation of a stable complex. GrpE releases ADP from DnaK; ATP binding to DnaK triggers the release of the substrate protein, thus completing the reaction cycle. Several rounds of ATP-dependent interactions between DnaJ, DnaK and GrpE are required for fully efficient folding. Also involved, together with DnaK and GrpE, in the DNA replication of plasmids through activation of initiation proteins. This Lysinibacillus sphaericus (Bacillus sphaericus) protein is Chaperone protein DnaJ.